We begin with the raw amino-acid sequence, 276 residues long: Large ribosomal subunit protein uL2 (276 aa).

The tract at residues 224 to 276 (AMNPIDHPHGGGEGKTSGGRNPVTPWGVPTKGKKTRKRNKSSNKYIKRVSDKG) is disordered. Positions 254 to 270 (KGKKTRKRNKSSNKYIK) are enriched in basic residues.

This sequence belongs to the universal ribosomal protein uL2 family. As to quaternary structure, part of the 50S ribosomal subunit. Forms a bridge to the 30S subunit in the 70S ribosome.

Its function is as follows. One of the primary rRNA binding proteins. Required for association of the 30S and 50S subunits to form the 70S ribosome, for tRNA binding and peptide bond formation. It has been suggested to have peptidyltransferase activity; this is somewhat controversial. Makes several contacts with the 16S rRNA in the 70S ribosome. The polypeptide is Large ribosomal subunit protein uL2 (Ehrlichia chaffeensis (strain ATCC CRL-10679 / Arkansas)).